We begin with the raw amino-acid sequence, 44 residues long: MTKGNANQPVSYPIFTFRWLAIHGLAIPTVFFLGAITSMQFIQR.

The chain crosses the membrane as a helical span at residues 19 to 35; it reads WLAIHGLAIPTVFFLGA. Histidine 23 lines the heme pocket.

It belongs to the PsbE/PsbF family. As to quaternary structure, heterodimer of an alpha subunit and a beta subunit. PSII is composed of 1 copy each of membrane proteins PsbA, PsbB, PsbC, PsbD, PsbE, PsbF, PsbH, PsbI, PsbJ, PsbK, PsbL, PsbM, PsbT, PsbX, PsbY, PsbZ, Psb30/Ycf12, at least 3 peripheral proteins of the oxygen-evolving complex and a large number of cofactors. It forms dimeric complexes. The cofactor is heme b.

It localises to the plastid. It is found in the chloroplast thylakoid membrane. This b-type cytochrome is tightly associated with the reaction center of photosystem II (PSII). PSII is a light-driven water:plastoquinone oxidoreductase that uses light energy to abstract electrons from H(2)O, generating O(2) and a proton gradient subsequently used for ATP formation. It consists of a core antenna complex that captures photons, and an electron transfer chain that converts photonic excitation into a charge separation. This chain is Cytochrome b559 subunit beta, found in Porphyra purpurea (Red seaweed).